Consider the following 320-residue polypeptide: Biotin synthase (320 aa).

The 230-residue stretch at 45-274 folds into the Radical SAM core domain; sequence NDLQKASLLS…DSRIRLSAGR (230 aa). [4Fe-4S] cluster contacts are provided by C60, C64, and C67. The [2Fe-2S] cluster site is built by C105, C137, C197, and R269.

Belongs to the radical SAM superfamily. Biotin synthase family. As to quaternary structure, homodimer. [4Fe-4S] cluster serves as cofactor. [2Fe-2S] cluster is required as a cofactor.

It carries out the reaction (4R,5S)-dethiobiotin + (sulfur carrier)-SH + 2 reduced [2Fe-2S]-[ferredoxin] + 2 S-adenosyl-L-methionine = (sulfur carrier)-H + biotin + 2 5'-deoxyadenosine + 2 L-methionine + 2 oxidized [2Fe-2S]-[ferredoxin]. The protein operates within cofactor biosynthesis; biotin biosynthesis; biotin from 7,8-diaminononanoate: step 2/2. In terms of biological role, catalyzes the conversion of dethiobiotin (DTB) to biotin by the insertion of a sulfur atom into dethiobiotin via a radical-based mechanism. The polypeptide is Biotin synthase (Beijerinckia indica subsp. indica (strain ATCC 9039 / DSM 1715 / NCIMB 8712)).